The sequence spans 421 residues: Diaminobutyrate--2-oxoglutarate transaminase (421 aa).

Lysine 262 carries the N6-(pyridoxal phosphate)lysine modification.

It belongs to the class-III pyridoxal-phosphate-dependent aminotransferase family. The cofactor is pyridoxal 5'-phosphate.

It catalyses the reaction L-2,4-diaminobutanoate + 2-oxoglutarate = L-aspartate 4-semialdehyde + L-glutamate. It participates in amine and polyamine biosynthesis; ectoine biosynthesis; L-ectoine from L-aspartate 4-semialdehyde: step 1/3. Its function is as follows. Catalyzes reversively the conversion of L-aspartate beta-semialdehyde (ASA) to L-2,4-diaminobutyrate (DABA) by transamination with L-glutamate. The protein is Diaminobutyrate--2-oxoglutarate transaminase (ectB) of Vibrio parahaemolyticus serotype O3:K6 (strain RIMD 2210633).